The sequence spans 254 residues: Triosephosphate isomerase (254 aa).

12 to 14 is a binding site for substrate; the sequence is NWK. H99 (electrophile) is an active-site residue. Residue E169 is the Proton acceptor of the active site. Substrate-binding positions include G175, S214, and 235–236; that span reads GG.

Belongs to the triosephosphate isomerase family. As to quaternary structure, homodimer.

It localises to the cytoplasm. It catalyses the reaction D-glyceraldehyde 3-phosphate = dihydroxyacetone phosphate. It participates in carbohydrate biosynthesis; gluconeogenesis. The protein operates within carbohydrate degradation; glycolysis; D-glyceraldehyde 3-phosphate from glycerone phosphate: step 1/1. Functionally, involved in the gluconeogenesis. Catalyzes stereospecifically the conversion of dihydroxyacetone phosphate (DHAP) to D-glyceraldehyde-3-phosphate (G3P). This chain is Triosephosphate isomerase, found in Brucella abortus biovar 1 (strain 9-941).